The primary structure comprises 351 residues: Uroporphyrinogen decarboxylase (351 aa).

Substrate is bound by residues 25 to 29, Asp-74, Tyr-151, Ser-206, and His-325; that span reads RQAGR.

It belongs to the uroporphyrinogen decarboxylase family. Homodimer.

The protein resides in the cytoplasm. The catalysed reaction is uroporphyrinogen III + 4 H(+) = coproporphyrinogen III + 4 CO2. Its pathway is porphyrin-containing compound metabolism; protoporphyrin-IX biosynthesis; coproporphyrinogen-III from 5-aminolevulinate: step 4/4. Its function is as follows. Catalyzes the decarboxylation of four acetate groups of uroporphyrinogen-III to yield coproporphyrinogen-III. The chain is Uroporphyrinogen decarboxylase from Prosthecochloris aestuarii (strain DSM 271 / SK 413).